A 393-amino-acid polypeptide reads, in one-letter code: 1-deoxy-D-xylulose 5-phosphate reductoisomerase (393 aa).

The NADPH site is built by threonine 13, glycine 14, serine 15, isoleucine 16, and asparagine 128. Lysine 129 lines the 1-deoxy-D-xylulose 5-phosphate pocket. Glutamate 130 is a binding site for NADPH. Aspartate 154 is a Mn(2+) binding site. 4 residues coordinate 1-deoxy-D-xylulose 5-phosphate: serine 155, glutamate 156, serine 178, and histidine 201. Glutamate 156 is a Mn(2+) binding site. Glycine 207 contacts NADPH. Serine 214, asparagine 219, lysine 220, and glutamate 223 together coordinate 1-deoxy-D-xylulose 5-phosphate. Glutamate 223 contacts Mn(2+).

This sequence belongs to the DXR family. It depends on Mg(2+) as a cofactor. Mn(2+) serves as cofactor.

The catalysed reaction is 2-C-methyl-D-erythritol 4-phosphate + NADP(+) = 1-deoxy-D-xylulose 5-phosphate + NADPH + H(+). It participates in isoprenoid biosynthesis; isopentenyl diphosphate biosynthesis via DXP pathway; isopentenyl diphosphate from 1-deoxy-D-xylulose 5-phosphate: step 1/6. In terms of biological role, catalyzes the NADPH-dependent rearrangement and reduction of 1-deoxy-D-xylulose-5-phosphate (DXP) to 2-C-methyl-D-erythritol 4-phosphate (MEP). The chain is 1-deoxy-D-xylulose 5-phosphate reductoisomerase from Acidithiobacillus ferrooxidans (strain ATCC 23270 / DSM 14882 / CIP 104768 / NCIMB 8455) (Ferrobacillus ferrooxidans (strain ATCC 23270)).